The chain runs to 337 residues: MAVEMFYDDDADLSIIQGRKVAVIGYGSQGHAHSLSLRDSGVDVRIGLKEGSKSRAKAEEQGLTVGTPAEVSEWADVIMVLAPDTAQASIFTNDIEPNLKDGDALFFGHGLNIHFELIKAPEFVTVGMVAPKGPGHLVRRQFVDGKGVPALIAIDQDPKGEGQALALSYAKAIGGARAGVIKTTFKEETETDLFGEQAVLCGGTEELVKTGFEVMVEAGYAPEMAYFEVLHELKLIVDLMYEGGIARMNYSVSDTAEFGGYLSGPRVIDAGTKERMKAILADIQSGEFTRRLVANVENGNTELEGLRKANAEHPIEVTGKKLRDLMSWVDRPITETA.

The region spanning 3 to 183 is the KARI N-terminal Rossmann domain; it reads VEMFYDDDAD…GGARAGVIKT (181 aa). NADP(+) is bound by residues 26-29, lysine 49, serine 52, serine 54, and 84-87; these read YGSQ and DTAQ. Histidine 109 is an active-site residue. Glycine 135 serves as a coordination point for NADP(+). Positions 184-329 constitute a KARI C-terminal knotted domain; the sequence is TFKEETETDL…KKLRDLMSWV (146 aa). The Mg(2+) site is built by aspartate 192, glutamate 196, glutamate 228, and glutamate 232. Residue serine 253 participates in substrate binding.

Belongs to the ketol-acid reductoisomerase family. Mg(2+) serves as cofactor.

The enzyme catalyses (2R)-2,3-dihydroxy-3-methylbutanoate + NADP(+) = (2S)-2-acetolactate + NADPH + H(+). It carries out the reaction (2R,3R)-2,3-dihydroxy-3-methylpentanoate + NADP(+) = (S)-2-ethyl-2-hydroxy-3-oxobutanoate + NADPH + H(+). It functions in the pathway amino-acid biosynthesis; L-isoleucine biosynthesis; L-isoleucine from 2-oxobutanoate: step 2/4. It participates in amino-acid biosynthesis; L-valine biosynthesis; L-valine from pyruvate: step 2/4. Its function is as follows. Involved in the biosynthesis of branched-chain amino acids (BCAA). Catalyzes an alkyl-migration followed by a ketol-acid reduction of (S)-2-acetolactate (S2AL) to yield (R)-2,3-dihydroxy-isovalerate. In the isomerase reaction, S2AL is rearranged via a Mg-dependent methyl migration to produce 3-hydroxy-3-methyl-2-ketobutyrate (HMKB). In the reductase reaction, this 2-ketoacid undergoes a metal-dependent reduction by NADPH to yield (R)-2,3-dihydroxy-isovalerate. This is Ketol-acid reductoisomerase (NADP(+)) from Rhodococcus opacus (strain B4).